Consider the following 815-residue polypeptide: Probable bifunctional folylpolyglutamate synthase/dihydropteroate synthase (815 aa).

The interval Met1–Ala416 is folylpolyglutamate synthase. Gly47–Ser53 provides a ligand contact to ATP. The region spanning Thr553–Arg803 is the Pterin-binding domain. Positions Val555–Glu815 are DHPS. Residue Asn560 participates in Mg(2+) binding. Residues Thr600, Asp633, Asn652, Asp722, Lys758, and Arg791–His793 contribute to the (7,8-dihydropterin-6-yl)methyl diphosphate site.

The protein in the N-terminal section; belongs to the folylpolyglutamate synthase family. It in the C-terminal section; belongs to the DHPS family. The cofactor is Mg(2+).

It carries out the reaction (6S)-5,6,7,8-tetrahydrofolyl-(gamma-L-Glu)(n) + L-glutamate + ATP = (6S)-5,6,7,8-tetrahydrofolyl-(gamma-L-Glu)(n+1) + ADP + phosphate + H(+). The enzyme catalyses (7,8-dihydropterin-6-yl)methyl diphosphate + 4-aminobenzoate = 7,8-dihydropteroate + diphosphate. Its pathway is cofactor biosynthesis; tetrahydrofolylpolyglutamate biosynthesis. It functions in the pathway cofactor biosynthesis; tetrahydrofolate biosynthesis; 7,8-dihydrofolate from 2-amino-4-hydroxy-6-hydroxymethyl-7,8-dihydropteridine diphosphate and 4-aminobenzoate: step 1/2. Its function is as follows. Can complement an H.volcanii mutant strain that is thymidine auxotroph because it lacks the two dihydrofolate reductase genes encoded by hdrA and hdrB. The protein is Probable bifunctional folylpolyglutamate synthase/dihydropteroate synthase (folP) of Halobacterium salinarum (strain ATCC 700922 / JCM 11081 / NRC-1) (Halobacterium halobium).